The chain runs to 158 residues: Crossover junction endodeoxyribonuclease RuvC (158 aa).

Residues Asp7, Glu66, and Asp139 contribute to the active site. Positions 7, 66, and 139 each coordinate Mg(2+).

This sequence belongs to the RuvC family. In terms of assembly, homodimer which binds Holliday junction (HJ) DNA. The HJ becomes 2-fold symmetrical on binding to RuvC with unstacked arms; it has a different conformation from HJ DNA in complex with RuvA. In the full resolvosome a probable DNA-RuvA(4)-RuvB(12)-RuvC(2) complex forms which resolves the HJ. Mg(2+) serves as cofactor.

The protein localises to the cytoplasm. The enzyme catalyses Endonucleolytic cleavage at a junction such as a reciprocal single-stranded crossover between two homologous DNA duplexes (Holliday junction).. The RuvA-RuvB-RuvC complex processes Holliday junction (HJ) DNA during genetic recombination and DNA repair. Endonuclease that resolves HJ intermediates. Cleaves cruciform DNA by making single-stranded nicks across the HJ at symmetrical positions within the homologous arms, yielding a 5'-phosphate and a 3'-hydroxyl group; requires a central core of homology in the junction. The consensus cleavage sequence is 5'-(A/T)TT(C/G)-3'. Cleavage occurs on the 3'-side of the TT dinucleotide at the point of strand exchange. HJ branch migration catalyzed by RuvA-RuvB allows RuvC to scan DNA until it finds its consensus sequence, where it cleaves and resolves the cruciform DNA. This is Crossover junction endodeoxyribonuclease RuvC from Nitratiruptor sp. (strain SB155-2).